The following is a 470-amino-acid chain: MTKTLPEDFIFGGATAAYQAEGATNTDGKGRVAWDTYLEENYWYTAEPASDFYNRYPVDLELSEKFGVNGIRISIAWSRIFPNGYGEVNPKGVEYYHKLFAECHKRHVEPFVTLHHFDTPEVLHKDGDFLNRKTIDYFVDYAEYCFKEFPEVKYWTTFNEIGPIGDGQYLVGKFPPGIKYDFEKVFQSHHNMMVAHARAVKLFKDGGYKGEIGVVHALPTKYPFDPSNPEDVRAAELEDIIHNKFILDATYLGKYSRETMEGVQHILSVNGGKLNITDEDYAILDAAKDLNDFLGINYYMSDWMRGYDGESEITHNATGDKGGSKYQLKGVGQREFDVDVPRTDWDWMIYPQGLYDQIMRVVKDYPNYHKIYITENGLGYKDEFIESEKTVHDDARIDYVRQHLNVIADAIIDGANVKGYFIWSLMDVFSWSNGYEKRYGLFYVDFETQERYPKKSAYWYKELAETKEIK.

Positions 19, 116, 159, 160, and 297 each coordinate D-galactose 6-phosphate. Catalysis depends on Glu-160, which acts as the Proton donor. The Nucleophile role is filled by Glu-375. Ser-430, Trp-431, Lys-437, and Tyr-439 together coordinate D-galactose 6-phosphate.

Belongs to the glycosyl hydrolase 1 family.

It carries out the reaction a 6-phospho-beta-D-galactoside + H2O = D-galactose 6-phosphate + an alcohol. It participates in carbohydrate metabolism; lactose degradation; D-galactose 6-phosphate and beta-D-glucose from lactose 6-phosphate: step 1/1. In Staphylococcus aureus (strain USA300), this protein is 6-phospho-beta-galactosidase.